We begin with the raw amino-acid sequence, 182 residues long: Chromophore lyase CpcS/CpeS (182 aa).

Belongs to the CpcS/CpeS biliprotein lyase family.

Covalently attaches a chromophore to Cys residue(s) of phycobiliproteins. This Thermosynechococcus vestitus (strain NIES-2133 / IAM M-273 / BP-1) protein is Chromophore lyase CpcS/CpeS.